We begin with the raw amino-acid sequence, 360 residues long: Probable neutral protease 2 homolog A (360 aa).

An N-terminal signal peptide occupies residues 1-17; sequence MQFTALLAALGAPLALA. Positions 18–183 are excised as a propeptide; the sequence is ASIPAAAHNH…DDSTGVIDKR (166 aa). Cystine bridges form between cysteine 191-cysteine 262, cysteine 269-cysteine 287, and cysteine 300-cysteine 360. An N-linked (GlcNAc...) asparagine glycan is attached at asparagine 205. A Zn(2+)-binding site is contributed by histidine 311. The active site involves glutamate 312. Residues histidine 315 and aspartate 326 each coordinate Zn(2+).

Belongs to the peptidase M35 family. Requires Zn(2+) as cofactor.

It is found in the secreted. It catalyses the reaction Preferential cleavage of bonds with hydrophobic residues in P1'. Also 3-Asn-|-Gln-4 and 8-Gly-|-Ser-9 bonds in insulin B chain.. Probable secreted metalloprotease that shows high activities on basic nuclear substrates such as histone and protamine. May be involved in virulence. This is Probable neutral protease 2 homolog A (NpII-A) from Trichophyton rubrum (Athlete's foot fungus).